The primary structure comprises 379 residues: Probable 3-phenylpropionic acid transporter (379 aa).

Residues 1-4 (MVLQ) lie on the Cytoplasmic side of the membrane. Residues 5–31 (STRWLALGYFTYFFSYGIFLPFWSVWL) traverse the membrane as a helical segment. At 32–37 (KGIGLT) the chain is on the periplasmic side. Residues 38–66 (PETIGLLLGAGLVARFLGSLLIAPRVSDP) traverse the membrane as a helical segment. At 67-70 (SRLI) the chain is on the cytoplasmic side. The chain crosses the membrane as a helical span at residues 71–96 (SALRVLALLTLLFAVAFWAGAHVAWL). Over 97 to 100 (MLVM) the chain is Periplasmic. Residues 101-118 (IGFNLFFSPLVPLTDALA) traverse the membrane as a helical segment. At 119–129 (NTWQKQFPLDY) the chain is on the cytoplasmic side. The chain crosses the membrane as a helical span at residues 130–152 (GKVRLWGSVAFVIGSALTGKLVT). At 153-155 (MFD) the chain is on the periplasmic side. A helical transmembrane segment spans residues 156–175 (YRVILALLTLGVASMLLGFL). The Cytoplasmic segment spans residues 176–207 (IRPTIQPQGASRQQESTGWSAWLALVRQNWRF). Residues 208-227 (LACVCLLQGAHAAYYGFSAI) traverse the membrane as a helical segment. Topologically, residues 228-231 (YWQA) are periplasmic. Residues 232–256 (AGYSASAVGYLWSLGVVAEVIIFAL) traverse the membrane as a helical segment. Over 257 to 266 (SNKLFRRCSA) the chain is Cytoplasmic. Residues 267 to 286 (RDMLLISAICGVVRWGIMGA) traverse the membrane as a helical segment. The Periplasmic segment spans residues 287–289 (TTA). A helical transmembrane segment spans residues 290–312 (LPWLIVVQILHCGTFTVCHLAAM). Topologically, residues 313–323 (RYIAARQGSEV) are cytoplasmic. The helical transmembrane segment at 324-351 (IRLQAVYSAVAMGGSIAIMTVFAGFLYQ) threads the bilayer. Residues 352–354 (YLG) are Periplasmic-facing. A helical transmembrane segment spans residues 355–375 (HGVFWVMALVALPAMFLRPKV). Over 376 to 379 (VPSC) the chain is Cytoplasmic.

Belongs to the major facilitator superfamily. Phenyl propionate permease (PPP) (TC 2.A.1.27) family.

The protein resides in the cell inner membrane. Probable permease involved in the uptake of 3-phenylpropionic acid. This Escherichia coli (strain K12) protein is Probable 3-phenylpropionic acid transporter (hcaT).